The primary structure comprises 260 residues: Thiazole synthase (260 aa).

Residue K96 is the Schiff-base intermediate with DXP of the active site. 1-deoxy-D-xylulose 5-phosphate-binding positions include G157, 184–185 (AG), and 206–207 (NT).

It belongs to the ThiG family. Homotetramer. Forms heterodimers with either ThiH or ThiS.

It is found in the cytoplasm. The catalysed reaction is [ThiS sulfur-carrier protein]-C-terminal-Gly-aminoethanethioate + 2-iminoacetate + 1-deoxy-D-xylulose 5-phosphate = [ThiS sulfur-carrier protein]-C-terminal Gly-Gly + 2-[(2R,5Z)-2-carboxy-4-methylthiazol-5(2H)-ylidene]ethyl phosphate + 2 H2O + H(+). It functions in the pathway cofactor biosynthesis; thiamine diphosphate biosynthesis. In terms of biological role, catalyzes the rearrangement of 1-deoxy-D-xylulose 5-phosphate (DXP) to produce the thiazole phosphate moiety of thiamine. Sulfur is provided by the thiocarboxylate moiety of the carrier protein ThiS. In vitro, sulfur can be provided by H(2)S. In Bradyrhizobium sp. (strain BTAi1 / ATCC BAA-1182), this protein is Thiazole synthase.